The sequence spans 109 residues: Parvalbumin beta (109 aa).

Ala-2 carries the N-acetylalanine modification. EF-hand domains lie at 39–74 (KSAD…FKAG) and 78–109 (LSDA…MIKG). Positions 52, 54, 56, 58, 60, 63, 91, 93, 95, 97, and 102 each coordinate Ca(2+).

The protein belongs to the parvalbumin family. The N-terminus is blocked.

Its function is as follows. In muscle, parvalbumin is thought to be involved in relaxation after contraction. It binds two calcium ions. This Scomber scombrus (Atlantic mackerel) protein is Parvalbumin beta.